Here is a 479-residue protein sequence, read N- to C-terminus: tRNA-2-methylthio-N(6)-dimethylallyladenosine synthase (479 aa).

Positions 3–120 (KKLYIKTWGC…LPEMVNQVSE (118 aa)) constitute an MTTase N-terminal domain. Residues cysteine 12, cysteine 49, cysteine 83, cysteine 157, cysteine 161, and cysteine 164 each coordinate [4Fe-4S] cluster. Residues 143–375 (KADGASAFVS…QQRLNQQSMA (233 aa)) form the Radical SAM core domain. Residues 378-441 (RRMLETEQRI…PNSLRGELIR (64 aa)) enclose the TRAM domain.

It belongs to the methylthiotransferase family. MiaB subfamily. As to quaternary structure, monomer. The cofactor is [4Fe-4S] cluster.

The protein resides in the cytoplasm. It carries out the reaction N(6)-dimethylallyladenosine(37) in tRNA + (sulfur carrier)-SH + AH2 + 2 S-adenosyl-L-methionine = 2-methylsulfanyl-N(6)-dimethylallyladenosine(37) in tRNA + (sulfur carrier)-H + 5'-deoxyadenosine + L-methionine + A + S-adenosyl-L-homocysteine + 2 H(+). Its function is as follows. Catalyzes the methylthiolation of N6-(dimethylallyl)adenosine (i(6)A), leading to the formation of 2-methylthio-N6-(dimethylallyl)adenosine (ms(2)i(6)A) at position 37 in tRNAs that read codons beginning with uridine. In Idiomarina loihiensis (strain ATCC BAA-735 / DSM 15497 / L2-TR), this protein is tRNA-2-methylthio-N(6)-dimethylallyladenosine synthase.